A 977-amino-acid polypeptide reads, in one-letter code: MISSKNGAAMISRPVFLSDRVDEVFSRKLDLSVSSSSSSSLLQQFNKTHEGDDDARLALAHQLYKGGDFKQALEHSNMVYQRNPLRTDNLLLIGAIYYQLQEYDMCIARNEEALRIQPQFAECYGNMANAWKEKGDTDRAIRYYLIAIELRPNFADAWSNLASAYMRKGRLSEATQCCQQALSLNPLLVDAHSNLGNLMKAQGLIHEAYSCYLEAVRIQPTFAIAWSNLAGLFMESGDLNRALQYYKEAVKLKPAFPDAYLNLGNVYKALGRPTEAIMCYQHALQMRPNSAMAFGNIASIYYEQGQLDLAIRHYKQALSRDPRFLEAYNNLGNALKDIGRVDEAVRCYNQCLALQPNHPQAMANLGNIYMEWNMMGPASSLFKATLAVTTGLSAPFNNLAIIYKQQGNYSDAISCYNEVLRIDPLAADALVNRGNTYKEIGRVTEAIQDYMHAINFRPTMAEAHANLASAYKDSGHVEAAITSYKQALLLRPDFPEATCNLLHTLQCVCCWEDRSKMFAEVESIIRRQINMSVLPSVQPFHAIAYPIDPILALEISRKYAAHCSIIASRFGLPPFTHPAGLPVKREGGFKRLRIGYVSSDFGNHPLSHLMGSVFGMHNRENVEVFCYALSANDNTEWRQRIQSEAEHFLDVSAMSSDAIAKIINQDKIQILINLNGYTKGARNEIFAMQPAPIQVSYMGFPGTTGATYIDYLVTDEFVSPLQYAHIYSEKLVHLPHCYFVNDYKQKNQDVLDPNSKPKRSDYGLPEDKFIFACFNQLYKMDPEIVNTWCNILKRVPNSALWLLRFPAAGEMRFRTYAAAQGVQPDQIIFTDVAMKSEHIRRSVLADVILDTPLCNGHTTGTDVLWAGVPMITLPLEKMATRVAGSLCLATGLGHGMIVNSLEEYEEKAVSLALNKPKLQALTKELRASRLTCPLFDTMRWVKNLERSYFKMWNLHCSGQQPQHFKVLENDLEFPHDR.

TPR repeat units lie at residues 2–35 (ISSK…SVSS), 53–86 (DDAR…NPLR), 87–120 (TDNL…QPQF), 121–154 (AECY…RPNF), 155–188 (ADAW…NPLL), 189–222 (VDAH…QPTF), 223–256 (AIAW…KPAF), 257–290 (PDAY…RPNS), 291–324 (AMAF…DPRF), 325–358 (LEAY…QPNH), 359–392 (PQAM…TTGL), 393–426 (SAPF…DPLA), 427–460 (ADAL…RPTM), and 461–494 (AEAH…RPDF). The tract at residues 495–977 (PEATCNLLHT…ENDLEFPHDR (483 aa)) is catalytic region.

The protein belongs to the glycosyltransferase 41 family. O-GlcNAc transferase subfamily. Interacts with TCP14 and TCP15. Interacts with ATX1.

It carries out the reaction L-seryl-[protein] + UDP-N-acetyl-alpha-D-glucosamine = 3-O-(N-acetyl-beta-D-glucosaminyl)-L-seryl-[protein] + UDP + H(+). The enzyme catalyses L-threonyl-[protein] + UDP-N-acetyl-alpha-D-glucosamine = 3-O-(N-acetyl-beta-D-glucosaminyl)-L-threonyl-[protein] + UDP + H(+). It participates in protein modification; protein glycosylation. Its function is as follows. O-linked N-acetylglucosamine transferase (OGT) that mediates O-glycosylation of capsid protein (CP) of virus in case of infection by Plum pox virus. OGTs catalyze the addition of nucleotide-activated sugars directly onto the polypeptide through O-glycosidic linkage with the hydroxyl of serine or threonine. Probably acts by adding O-linked sugars to yet unknown proteins. Its OGT activity has been proved in vitro but not in vivo. Required with SPY for gamete and seed development. Mediates O-glycosylation of the DELLA protein RGA, a repressor of the gibberellin (GA) signaling pathway. O-glycosylation by SEC inhibits RGA binding to four of its interactors PIF3, PIF4, JAZ1, and BZR1 that are key regulators in light, jasmonate, and brassinosteroid signaling pathways, respectively. Activates ATX1 through O-GlcNAc modification to augment ATX1-mediated H3K4me3 histone epigenetic modification at FLC locus, thus preventing premature flowering. This chain is Probable UDP-N-acetylglucosamine--peptide N-acetylglucosaminyltransferase SEC, found in Arabidopsis thaliana (Mouse-ear cress).